We begin with the raw amino-acid sequence, 172 residues long: Adenylate kinase isoenzyme 6 (172 aa).

ATP is bound by residues Gly-13, Gly-15, Lys-16, Thr-17, and Thr-18. The tract at residues 33–56 (NVGDLAREEQLYDGYDEEYDCPIL) is NMP. The NMPbind stretch occupies residues 33-56 (NVGDLAREEQLYDGYDEEYDCPIL). Residues 108–118 (TRGYNEKKLTD) form an LID region. ATP-binding residues include Arg-109 and Lys-148.

The protein belongs to the adenylate kinase family. AK6 subfamily. As to quaternary structure, monomer and homodimer. Interacts with small ribosomal subunit protein uS11. Not a structural component of 43S pre-ribosomes, but transiently interacts with them by binding to uS11. Interacts with COIL (via C-terminus). In terms of tissue distribution, expressed in heart, brain, placenta, lung, liver, skeletal muscle, kidney, pancreas, chorionic villi and the central nervous system.

It is found in the cytoplasm. Its subcellular location is the nucleus. It localises to the nucleoplasm. The protein resides in the cajal body. It catalyses the reaction AMP + ATP = 2 ADP. The enzyme catalyses ATP + H2O = ADP + phosphate + H(+). Broad-specificity nucleoside monophosphate (NMP) kinase that catalyzes the reversible transfer of the terminal phosphate group between nucleoside triphosphates and monophosphates. Also has ATPase activity. Involved in the late cytoplasmic maturation steps of the 40S ribosomal particles, specifically 18S rRNA maturation. While NMP activity is not required for ribosome maturation, ATPase activity is. Associates transiently with small ribosomal subunit protein uS11. ATP hydrolysis breaks the interaction with uS11. May temporarily remove uS11 from the ribosome to enable a conformational change of the ribosomal RNA that is needed for the final maturation step of the small ribosomal subunit. Its NMP activity may have a role in nuclear energy homeostasis. AMP and dAMP are the preferred substrates, but CMP and dCMP are also good substrates. IMP is phosphorylated to a much lesser extent. All nucleoside triphosphates ATP, GTP, UTP, CTP, dATP, dCTP, dGTP, and TTP are accepted as phosphate donors. CTP is the best phosphate donor, followed by UTP, ATP, GTP and dCTP. May be involved in regulation of Cajal body (CB) formation. The chain is Adenylate kinase isoenzyme 6 from Homo sapiens (Human).